We begin with the raw amino-acid sequence, 186 residues long: Ribosome maturation factor RimM (186 aa).

One can recognise a PRC barrel domain in the interval P93 to L166. Residues I160 to A186 form a disordered region. The segment covering D174–A186 has biased composition (acidic residues).

The protein belongs to the RimM family. As to quaternary structure, binds ribosomal protein uS19.

It localises to the cytoplasm. An accessory protein needed during the final step in the assembly of 30S ribosomal subunit, possibly for assembly of the head region. Essential for efficient processing of 16S rRNA. May be needed both before and after RbfA during the maturation of 16S rRNA. It has affinity for free ribosomal 30S subunits but not for 70S ribosomes. This Streptomyces avermitilis (strain ATCC 31267 / DSM 46492 / JCM 5070 / NBRC 14893 / NCIMB 12804 / NRRL 8165 / MA-4680) protein is Ribosome maturation factor RimM.